Here is a 363-residue protein sequence, read N- to C-terminus: NAD-dependent epimerase/dehydratase tndE (363 aa).

Residues 10-30 (GLVLITGVNGFLASHLALQLI) traverse the membrane as a helical segment. Y176 contacts NADP(+).

This sequence belongs to the NAD(P)-dependent epimerase/dehydratase family. Dihydroflavonol-4-reductase subfamily.

It localises to the membrane. It functions in the pathway secondary metabolite biosynthesis; terpenoid biosynthesis. NAD-dependent epimerase/dehydratase; part of the gene cluster that mediates the biosynthesis of talaronoid C, a fusicoccane diterpenoid with an unprecedented tricyclic 5/8/6 ring system. The first step in the pathway is performed by the fusicoccadiene synthase tndC that possesses both prenyl transferase and terpene cyclase activity, converting isopentenyl diphosphate and dimethylallyl diphosphate into geranylgeranyl diphosphate (GGDP) and further converting GGDP into talarodiene, a precursor for talaronoid C. The remaining enzymes from the cluster include the cytochrome P450 monooxygenase tndB, the aldehyde reductase tndE and the alcohol dehydrogenase tndF that are involved in the conversion of talarodiene into talaronoid C. The polypeptide is NAD-dependent epimerase/dehydratase tndE (Aspergillus flavipes).